The following is a 199-amino-acid chain: Adenylate kinase (199 aa).

8–13 (GAGKGT) is an ATP binding site. The NMP stretch occupies residues 28-57 (STGDIFRANIKNKTELGQQVKAIVDAGDYV). AMP contacts are provided by residues Thr29, Arg34, 55–57 (DYV), 83–86 (GYPR), and Gln90. The interval 124 to 134 (KRAREQGRADD) is LID. Residue Arg125 coordinates ATP. Positions 131 and 142 each coordinate AMP. Position 170 (Gly170) interacts with ATP.

This sequence belongs to the adenylate kinase family. In terms of assembly, monomer.

The protein localises to the cytoplasm. The enzyme catalyses AMP + ATP = 2 ADP. It participates in purine metabolism; AMP biosynthesis via salvage pathway; AMP from ADP: step 1/1. Catalyzes the reversible transfer of the terminal phosphate group between ATP and AMP. Plays an important role in cellular energy homeostasis and in adenine nucleotide metabolism. The sequence is that of Adenylate kinase from Leifsonia xyli subsp. xyli (strain CTCB07).